We begin with the raw amino-acid sequence, 323 residues long: Cobalamin biosynthesis protein CobD (323 aa).

5 helical membrane-spanning segments follow: residues 52–72 (IAGVLLLALTVTSAASVTWLM), 73–93 (VWGSARLHALAGLMVAALLSS), 154–174 (DGIIAPLFWLALGGPVAGMAF), 214–234 (ALLMVMVAPLIGLSQANAASI), and 294–314 (IRLMYATTLAMAVISLATAAL).

Belongs to the CobD/CbiB family.

The protein localises to the cell membrane. It participates in cofactor biosynthesis; adenosylcobalamin biosynthesis. In terms of biological role, converts cobyric acid to cobinamide by the addition of aminopropanol on the F carboxylic group. This Pelobacter propionicus (strain DSM 2379 / NBRC 103807 / OttBd1) protein is Cobalamin biosynthesis protein CobD.